Here is a 520-residue protein sequence, read N- to C-terminus: Transactivator/viroplasmin protein (520 aa).

Residues 487–520 (QDASADSGPKDGPPPTRSIVEKEDVPTTSSKQVD) are disordered.

It belongs to the caulimoviridae viroplasmin family.

It localises to the host cytoplasm. Its function is as follows. Enhances the ribosomal termination-reinitiation event leading to the translation of major open reading frames on the polycistronic viral RNAs. The chain is Transactivator/viroplasmin protein from Cauliflower mosaic virus (strain CM-1841) (CaMV).